Consider the following 124-residue polypeptide: Ribonuclease pancreatic (124 aa).

Positions 1–24 are disordered; sequence KETAAAKFQRQHMDSSTSSASSSN. Lys-7 and Arg-10 together coordinate substrate. Residue His-12 is the Proton acceptor of the active site. Intrachain disulfides connect Cys-26–Cys-84, Cys-40–Cys-95, Cys-58–Cys-110, and Cys-65–Cys-72. N-linked (GlcNAc...) asparagine; in river-breed only glycosylation is present at Asn-34. Residues 41 to 45, Lys-66, and Arg-85 contribute to the substrate site; that span reads KPVNT. His-119 serves as the catalytic Proton donor.

This sequence belongs to the pancreatic ribonuclease family. In terms of assembly, monomer. Interacts with and forms tight 1:1 complexes with RNH1. Dimerization of two such complexes may occur. Interaction with RNH1 inhibits this protein. Post-translationally, swamp breed ribonuclease do not bind carbohydrate, but there is evidence of a polymorphic form that does. As to expression, pancreas.

It is found in the secreted. It carries out the reaction an [RNA] containing cytidine + H2O = an [RNA]-3'-cytidine-3'-phosphate + a 5'-hydroxy-ribonucleotide-3'-[RNA].. The catalysed reaction is an [RNA] containing uridine + H2O = an [RNA]-3'-uridine-3'-phosphate + a 5'-hydroxy-ribonucleotide-3'-[RNA].. Functionally, endonuclease that catalyzes the cleavage of RNA on the 3' side of pyrimidine nucleotides. Acts on single-stranded and double-stranded RNA. The polypeptide is Ribonuclease pancreatic (RNASE1) (Bubalus bubalis (Domestic water buffalo)).